The following is a 256-amino-acid chain: MRRQRERKSMPDAVKKVYLIHGWGANRHMFDDLMPRLPATWPVSAVDLPGHGDAPFAQPFDIEAAADAVAAQIDTPADILGWSLGGLVALYLAARHPDKVRSLCLTASFARLTAAEDYPEGLAAPALGKMVGAFRSDYAKHIKQFLQLQLLHTPDADGIIGRILPDLARCGTPSALQEALDAAERADARHLLDKIDVPVLLVFGGKDAITPPRMGEYLHRHLKGSRLVVMEKAAHAPFLSHAEAFAALYRDFVEGV.

In terms of domain architecture, AB hydrolase-1 spans 17 to 241; sequence VYLIHGWGAN…KAAHAPFLSH (225 aa). Residues Trp23, 83–84, and 145–149 contribute to the substrate site; these read SL and FLQLQ. Ser83 (nucleophile) is an active-site residue. Catalysis depends on residues Asp207 and His235. His235 lines the substrate pocket.

Belongs to the AB hydrolase superfamily. Carboxylesterase BioH family. As to quaternary structure, monomer.

The protein localises to the cytoplasm. The enzyme catalyses 6-carboxyhexanoyl-[ACP] methyl ester + H2O = 6-carboxyhexanoyl-[ACP] + methanol + H(+). It participates in cofactor biosynthesis; biotin biosynthesis. Its function is as follows. The physiological role of BioH is to remove the methyl group introduced by BioC when the pimeloyl moiety is complete. It allows to synthesize pimeloyl-ACP via the fatty acid synthetic pathway through the hydrolysis of the ester bonds of pimeloyl-ACP esters. The protein is Pimeloyl-[acyl-carrier protein] methyl ester esterase of Neisseria meningitidis serogroup C / serotype 2a (strain ATCC 700532 / DSM 15464 / FAM18).